The primary structure comprises 89 residues: MAKKSKIAKAKRIEATVEKFANRRAELKAAGDYAALALLPRDASPTRIHRRDHLDGRPHAYMRKFGLSRLNFRQLAHEGKIPGVQKASW.

It belongs to the universal ribosomal protein uS14 family. In terms of assembly, part of the 30S ribosomal subunit. Contacts proteins S3 and S10.

Binds 16S rRNA, required for the assembly of 30S particles and may also be responsible for determining the conformation of the 16S rRNA at the A site. This chain is Small ribosomal subunit protein uS14A, found in Levilactobacillus brevis (strain ATCC 367 / BCRC 12310 / CIP 105137 / JCM 1170 / LMG 11437 / NCIMB 947 / NCTC 947) (Lactobacillus brevis).